The primary structure comprises 203 residues: dTTP/UTP pyrophosphatase (203 aa).

Asp74 acts as the Proton acceptor in catalysis.

The protein belongs to the Maf family. YhdE subfamily. Requires a divalent metal cation as cofactor.

It localises to the cytoplasm. It carries out the reaction dTTP + H2O = dTMP + diphosphate + H(+). It catalyses the reaction UTP + H2O = UMP + diphosphate + H(+). In terms of biological role, nucleoside triphosphate pyrophosphatase that hydrolyzes dTTP and UTP. May have a dual role in cell division arrest and in preventing the incorporation of modified nucleotides into cellular nucleic acids. The sequence is that of dTTP/UTP pyrophosphatase from Treponema denticola (strain ATCC 35405 / DSM 14222 / CIP 103919 / JCM 8153 / KCTC 15104).